Consider the following 544-residue polypeptide: Chaperonin GroEL 1 (544 aa).

ATP contacts are provided by residues 30–33, lysine 51, 87–91, glycine 415, 481–483, and aspartate 497; these read TLGP, DGTTT, and DAL.

The protein belongs to the chaperonin (HSP60) family. As to quaternary structure, forms a cylinder of 14 subunits composed of two heptameric rings stacked back-to-back. Interacts with the co-chaperonin GroES.

It localises to the cytoplasm. It catalyses the reaction ATP + H2O + a folded polypeptide = ADP + phosphate + an unfolded polypeptide.. In terms of biological role, together with its co-chaperonin GroES, plays an essential role in assisting protein folding. The GroEL-GroES system forms a nano-cage that allows encapsulation of the non-native substrate proteins and provides a physical environment optimized to promote and accelerate protein folding. This Chlamydia caviae (strain ATCC VR-813 / DSM 19441 / 03DC25 / GPIC) (Chlamydophila caviae) protein is Chaperonin GroEL 1.